The following is a 143-amino-acid chain: Large ribosomal subunit protein uL15 (143 aa).

Residues 1–59 (MELNGIKPSLGAKHAKRRVGRGIGSGLGKTAGRGHKGQKSRAGGYHKVGFEGGQMPMQR) are disordered. Positions 21–31 (RGIGSGLGKTA) are enriched in gly residues.

Belongs to the universal ribosomal protein uL15 family. Part of the 50S ribosomal subunit.

Its function is as follows. Binds to the 23S rRNA. This chain is Large ribosomal subunit protein uL15, found in Polaromonas sp. (strain JS666 / ATCC BAA-500).